Consider the following 257-residue polypeptide: RING1 and YY1-binding protein B (257 aa).

Disordered regions lie at residues 1-24 and 45-257; these read MGDK…GFWD and RKGT…DESF. The RanBP2-type zinc finger occupies 19–48; sequence DNGFWDCSVCTFRNSAEAFKCSICDVRKGT. Over residues 74–129 the composition is skewed to basic and acidic residues; that stretch reads PKKEKKEKPERPEKDRAEEERPDINPPDEHPVEQRDKDKSEKEQPEKEKKDREKEI. Positions 149–168 are enriched in polar residues; the sequence is HQSPPSERNSIQSGKSTTKT. Over residues 169–178 the composition is skewed to basic residues; that stretch reads KNSHNSRPKL. Residues 209-233 show a composition bias toward low complexity; that stretch reads TSSTSSSTVTSSASSEQQHQSSGSE.

Its subcellular location is the nucleus. It is found in the cytoplasm. Its function is as follows. May be implicated in the regulation of the transcription as a repressor of the transcriptional activity of E4TF1. In Danio rerio (Zebrafish), this protein is RING1 and YY1-binding protein B (rybpb).